We begin with the raw amino-acid sequence, 371 residues long: Barbiturase 1 (371 aa).

The segment at M1–D103 is RU A. Residues R53 and S82–G83 each bind substrate. Positions R115–P250 are RU B. K165 is an active-site residue. Residues N197 and S233–S234 contribute to the substrate site. The Nucleophile role is filled by S233. Positions Y256–G371 are RU C. E304 serves as a coordination point for Mg(2+). Residues K331 and S350 to V351 contribute to the substrate site. Residues A353, Q356, G357, P358, and G361 each contribute to the Mg(2+) site.

Belongs to the cyclic amide hydrolase (CyAH) family. In terms of assembly, homotetramer.

It catalyses the reaction barbiturate + H2O = 3-oxo-3-ureidopropanoate. It functions in the pathway pyrimidine metabolism; uracil degradation via oxidative pathway; malonate and urea from uracil: step 2/3. Inhibited by cyanuric acid. Its function is as follows. Responsible for the hydrolysis of barbituric acid (2,4,6-trihydroxy-1,3-pyrimidine), an intermediate in the oxidative catabolism of pyrimidines. Catalyzes the hydrolytic opening of the pyrimidine ring of barbituric acid to yield ureidomalonic acid. The sequence is that of Barbiturase 1 from Nocardioides sp. (strain ATCC BAA-499 / JS614).